The following is a 593-amino-acid chain: Glyoxylate carboligase (593 aa).

This sequence belongs to the TPP enzyme family. In terms of assembly, homotetramer. Mg(2+) is required as a cofactor. Thiamine diphosphate serves as cofactor.

The catalysed reaction is 2 glyoxylate + H(+) = 2-hydroxy-3-oxopropanoate + CO2. It functions in the pathway organic acid metabolism; glycolate degradation; 3-phospho-D-glycerate from glycolate: step 2/4. Its function is as follows. Catalyzes the condensation of two molecules of glyoxylate to give 2-hydroxy-3-oxopropanoate (also termed tartronate semialdehyde). The sequence is that of Glyoxylate carboligase (gcl) from Escherichia coli O157:H7.